The following is a 213-amino-acid chain: Phosphoenolpyruvate guanylyltransferase (213 aa).

T146, G161, and S164 together coordinate phosphoenolpyruvate.

Belongs to the CofC family.

The enzyme catalyses phosphoenolpyruvate + GTP + H(+) = enolpyruvoyl-2-diphospho-5'-guanosine + diphosphate. It functions in the pathway cofactor biosynthesis; coenzyme F420 biosynthesis. Its function is as follows. Guanylyltransferase that catalyzes the activation of phosphoenolpyruvate (PEP) as enolpyruvoyl-2-diphospho-5'-guanosine, via the condensation of PEP with GTP. It is involved in the biosynthesis of coenzyme F420, a hydride carrier cofactor. The polypeptide is Phosphoenolpyruvate guanylyltransferase (Mycolicibacterium vanbaalenii (strain DSM 7251 / JCM 13017 / BCRC 16820 / KCTC 9966 / NRRL B-24157 / PYR-1) (Mycobacterium vanbaalenii)).